Reading from the N-terminus, the 476-residue chain is BTB/POZ domain-containing protein KCTD8 (476 aa).

The region spanning 44-122 is the BTB domain; sequence EVVELNVGGQ…LRDKQLALPE (79 aa). Serine 78 bears the Phosphoserine mark. Arginine 80 is modified (omega-N-methylarginine). The tract at residues 331 to 412 is disordered; it reads SPKQEHEDRK…WMPPPDKRRN (82 aa). Basic and acidic residues predominate over residues 333-349; that stretch reads KQEHEDRKRDKVTDKGS. Over residues 350-391 the composition is skewed to polar residues; the sequence is ESGTSCNELSTSSCDSHSEASTPQDNPANTQQAAAHQPNTLT. Position 413 is a phosphoserine (serine 413).

In terms of assembly, interacts as a tetramer with GABBR1 and GABBR2.

Its subcellular location is the presynaptic cell membrane. The protein localises to the postsynaptic cell membrane. In terms of biological role, auxiliary subunit of GABA-B receptors that determine the pharmacology and kinetics of the receptor response. Increases agonist potency and markedly alter the G-protein signaling of the receptors by accelerating onset and promoting desensitization. The chain is BTB/POZ domain-containing protein KCTD8 (Kctd8) from Mus musculus (Mouse).